Reading from the N-terminus, the 100-residue chain is Large ribosomal subunit protein uL23 (100 aa).

The protein belongs to the universal ribosomal protein uL23 family. In terms of assembly, part of the 50S ribosomal subunit. Contacts protein L29, and trigger factor when it is bound to the ribosome.

One of the early assembly proteins it binds 23S rRNA. One of the proteins that surrounds the polypeptide exit tunnel on the outside of the ribosome. Forms the main docking site for trigger factor binding to the ribosome. The chain is Large ribosomal subunit protein uL23 from Mycolicibacterium vanbaalenii (strain DSM 7251 / JCM 13017 / BCRC 16820 / KCTC 9966 / NRRL B-24157 / PYR-1) (Mycobacterium vanbaalenii).